The chain runs to 365 residues: Ribosomal RNA large subunit methyltransferase F (365 aa).

Composition is skewed to low complexity over residues methionine 1 to glycine 18 and alanine 30 to lysine 42. Residues methionine 1–lysine 50 form a disordered region.

The protein belongs to the methyltransferase superfamily. METTL16/RlmF family.

The protein localises to the cytoplasm. The catalysed reaction is adenosine(1618) in 23S rRNA + S-adenosyl-L-methionine = N(6)-methyladenosine(1618) in 23S rRNA + S-adenosyl-L-homocysteine + H(+). Functionally, specifically methylates the adenine in position 1618 of 23S rRNA. This Shewanella oneidensis (strain ATCC 700550 / JCM 31522 / CIP 106686 / LMG 19005 / NCIMB 14063 / MR-1) protein is Ribosomal RNA large subunit methyltransferase F.